The sequence spans 815 residues: Cilia- and flagella-associated protein 251 (815 aa).

WD repeat units lie at residues 58–99 (GHTS…PTRT), 103–148 (PHRH…TPPE), 166–205 (PAGD…PRFQ), 218–257 (QSVG…AQVG), 271–308 (IHNC…VAWF), 379–418 (SLLA…LLGG), 420–460 (AFER…DLYV), 463–502 (NTAA…HTMR), 511–553 (SHHG…VAAG), and 573–612 (SFAP…LERS).

As to quaternary structure, identified in a spoke-associated complex containing CFAP61, CFAP91 and CFAP251; the complex is associated with the radial spokes in the axoneme. The complex associates with Calmodulin; the association is calcium sensitive.

The protein resides in the cytoplasm. It is found in the cytoskeleton. It localises to the flagellum axoneme. As component of a spoke-associated complex, regulates flagellar dynein activity by mediating regulatory signals between the radial spokes and dynein arms. In Chlamydomonas reinhardtii (Chlamydomonas smithii), this protein is Cilia- and flagella-associated protein 251.